A 1848-amino-acid polypeptide reads, in one-letter code: Chitin synthase E (1848 aa).

The segment covering 1–17 (MAAPSPAGGAPSHAQSS) has biased composition (low complexity). The tract at residues 1-22 (MAAPSPAGGAPSHAQSSLPSLP) is disordered. Residues 1 to 779 (MAAPSPAGGA…CWADLAKVGE (779 aa)) form the Myosin motor domain. Position 102–109 (102–109 (GESGSGKT)) interacts with ATP. Residues 593–621 (SSKPLRMPSMARRKTSPSSRLAFDAGDAD) form a disordered region. An actin-binding region spans residues 659–683 (LDIVNKCLSSTNLNPYFIFCLKPND). Helical transmembrane passes span 889 to 909 (WIAL…KLFG) and 928 to 948 (LIIW…PGLV). One can recognise a Cytochrome b5 heme-binding domain in the interval 952–1040 (QHVYSAAELS…LLDYRPTNIS (89 aa)). Asn1038 and Asn1063 each carry an N-linked (GlcNAc...) asparagine glycan. Residues 1200–1220 (FILAISVLICSIIVFKFLAAL) traverse the membrane as a helical segment. N-linked (GlcNAc...) asparagine glycans are attached at residues Asn1423, Asn1457, and Asn1563. The next 3 membrane-spanning stretches (helical) occupy residues 1595-1615 (LSTV…YWLV), 1621-1641 (IPYT…LIFI), and 1648-1668 (MVGW…ALPL). Residue Asn1786 is glycosylated (N-linked (GlcNAc...) asparagine). Residues 1790-1845 (LPSDDAILAEIREILRTADLMSVTKKSIKLELERRFGVNLDLKRPYINSATEAVLA) enclose the DEK-C domain.

It in the N-terminal section; belongs to the TRAFAC class myosin-kinesin ATPase superfamily. Myosin family. The protein in the C-terminal section; belongs to the chitin synthase family. Class V subfamily.

It localises to the cell membrane. The protein localises to the cell septum. Its subcellular location is the cell tip. The enzyme catalyses [(1-&gt;4)-N-acetyl-beta-D-glucosaminyl](n) + UDP-N-acetyl-alpha-D-glucosamine = [(1-&gt;4)-N-acetyl-beta-D-glucosaminyl](n+1) + UDP + H(+). Functionally, polymerizes chitin, a structural polymer of the cell wall and septum, by transferring the sugar moiety of UDP-GlcNAc to the non-reducing end of the growing chitin polymer. Important for hyphal growth and conidiophore development but not pathogenicity. This Aspergillus fumigatus (strain ATCC MYA-4609 / CBS 101355 / FGSC A1100 / Af293) (Neosartorya fumigata) protein is Chitin synthase E.